Here is a 252-residue protein sequence, read N- to C-terminus: Small ribosomal subunit protein uS3 (252 aa).

The region spanning 39–110 (IRKALMKELK…EVKINVVEIK (72 aa)) is the KH type-2 domain. The tract at residues 218–252 (TSDEKPKFEKRDFNRSNNNRRDQAPKSHPVAKEAK) is disordered. The span at 219 to 252 (SDEKPKFEKRDFNRSNNNRRDQAPKSHPVAKEAK) shows a compositional bias: basic and acidic residues.

Belongs to the universal ribosomal protein uS3 family. As to quaternary structure, part of the 30S ribosomal subunit. Forms a tight complex with proteins S10 and S14.

Binds the lower part of the 30S subunit head. Binds mRNA in the 70S ribosome, positioning it for translation. The chain is Small ribosomal subunit protein uS3 from Spiroplasma citri.